The sequence spans 219 residues: Deoxyribose-phosphate aldolase 1 (219 aa).

D87 (proton donor/acceptor) is an active-site residue. K149 functions as the Schiff-base intermediate with acetaldehyde in the catalytic mechanism. K178 acts as the Proton donor/acceptor in catalysis.

Belongs to the DeoC/FbaB aldolase family. DeoC type 1 subfamily.

It localises to the cytoplasm. It carries out the reaction 2-deoxy-D-ribose 5-phosphate = D-glyceraldehyde 3-phosphate + acetaldehyde. It participates in carbohydrate degradation; 2-deoxy-D-ribose 1-phosphate degradation; D-glyceraldehyde 3-phosphate and acetaldehyde from 2-deoxy-alpha-D-ribose 1-phosphate: step 2/2. Functionally, catalyzes a reversible aldol reaction between acetaldehyde and D-glyceraldehyde 3-phosphate to generate 2-deoxy-D-ribose 5-phosphate. The polypeptide is Deoxyribose-phosphate aldolase 1 (Vibrio vulnificus (strain YJ016)).